Here is a 122-residue protein sequence, read N- to C-terminus: Small ribosomal subunit protein uS13 (122 aa).

A disordered region spans residues 97–122 (PVRGQRTHTNARTRKGPARAIAGKKK).

It belongs to the universal ribosomal protein uS13 family. As to quaternary structure, part of the 30S ribosomal subunit. Forms a loose heterodimer with protein S19. Forms two bridges to the 50S subunit in the 70S ribosome.

Its function is as follows. Located at the top of the head of the 30S subunit, it contacts several helices of the 16S rRNA. In the 70S ribosome it contacts the 23S rRNA (bridge B1a) and protein L5 of the 50S subunit (bridge B1b), connecting the 2 subunits; these bridges are implicated in subunit movement. Contacts the tRNAs in the A and P-sites. The sequence is that of Small ribosomal subunit protein uS13 from Bartonella bacilliformis (strain ATCC 35685 / KC583 / Herrer 020/F12,63).